The sequence spans 1521 residues: Suppressor of Ty 6 homolog (1521 aa).

A disordered region spans residues 1–238; sequence MDFIDNQAEE…EEIIEDDGEG (238 aa). Basic residues predominate over residues 26–41; sequence KKMKMAKEKSKRKKKM. The short motif at 26-42 is the Nuclear localization signal element; the sequence is KKMKMAKEKSKRKKKMV. Acidic residues-rich tracts occupy residues 45–56 and 67–76; these read SDEDEDDDDDEE and ADDDDEEEDA. Residues 77–89 show a composition bias toward basic and acidic residues; that stretch reads KSEKSEKSRHSGE. Residues 90–99 are compositionally biased toward acidic residues; it reads DELDDEDLDL. A compositionally biased stretch (basic and acidic residues) spans 126–157; it reads PIRRPNHEDDDLLSERGSDDGDRRKDRGRGDR. 3 stretches are compositionally biased toward acidic residues: residues 166 to 176, 191 to 200, and 209 to 238; these read RSEDDFIEDDG, NLPEGAEDDA, and FNLD…DGEG. The 70-residue stretch at 1183–1252 folds into the S1 motif domain; sequence LGDSRQGGCP…ERFSLFLSCK (70 aa). The 90-residue stretch at 1300–1389 folds into the SH2 domain; the sequence is HPNFHNVSYE…IARFVQPMIQ (90 aa).

This sequence belongs to the SPT6 family. As to quaternary structure, interacts with glp-1 and lin-12. Abundant in embryos, and less abundant in larvae.

The protein resides in the nucleus. Its function is as follows. Histone H3-H4 chaperone that plays a role in maintenance of chromatin structure during RNA polymerase II transcription elongation. Required for several aspects of morphogenesis of C.elegans, including regulation of division in the germline and gut and specification of ventral-uterine precursor cell fate. The polypeptide is Suppressor of Ty 6 homolog (emb-5) (Caenorhabditis elegans).